We begin with the raw amino-acid sequence, 105 residues long: Dynein axonemal light chain 4 (105 aa).

This sequence belongs to the dynein light chain family. As to quaternary structure, consists of at least two heavy chains and a number of intermediate and light chains.

The protein localises to the cytoplasm. It is found in the cytoskeleton. The protein resides in the cilium axoneme. In terms of biological role, force generating protein of respiratory cilia. Produces force towards the minus ends of microtubules. Dynein has ATPase activity. The chain is Dynein axonemal light chain 4 (DNAL4) from Bos taurus (Bovine).